The primary structure comprises 345 residues: MEIDPNYVNPKYSSLKSTVMNSEVLTSKYKSAIHHAGDGELEDDILAVMEELHSMLQEKGLACHTENLEVFSSTILHLKTTGQENRAGDLIAAILSFGCSISAQAIVPSTLLKTMSEMLDSFATRNHELKLITKDLQEVVPRQVLKAKKKSKAKSAEGPSASTEDIKDSDTKGNQDIGDNGDLNSSINQRNREICYKHYTTDEFEALSLEKRQEIMKYYIQYILGAWGYNATDPTKTAMLYDLIDKHTVITVMRQSKEGTLTSDDILMAIDEVIDSVNSMSSCYGGYKATIGNDNGTPYLVLIPKEGVILLSYPPPIPVTHHYYNKALSFIFPCAITIFSSPIYI.

The tract at residues 148–185 (KKKSKAKSAEGPSASTEDIKDSDTKGNQDIGDNGDLNS) is disordered. A compositionally biased stretch (basic and acidic residues) spans 164–173 (EDIKDSDTKG).

The protein resides in the virion. The protein is Matrix protein (M2) of Aphis (Hairy beggarticks).